Here is a 603-residue protein sequence, read N- to C-terminus: ABC transporter E family member 1 (603 aa).

4Fe-4S ferredoxin-type domains follow at residues 7–39 and 46–75; these read RIAIVSEDRCKPKKCRQECKKSCPVVKTGKLCI and KSAFISEELCIGCGICVKKCPFEAIQIINL. ABC transporter domains follow at residues 70–315 and 344–566; these read IQII…FLAG and VKSY…LSHL. Residues 110–117 and 381–388 contribute to the ATP site; these read GTNGIGKS and GENGTGKT.

Belongs to the ABC transporter superfamily. ABCE family. Expressed in roots, stems, leaves, flowers and siliques.

It localises to the membrane. This is ABC transporter E family member 1 (ABCE1) from Arabidopsis thaliana (Mouse-ear cress).